Here is a 234-residue protein sequence, read N- to C-terminus: Ribonuclease 3 (234 aa).

In terms of domain architecture, RNase III spans 4–133; that stretch reads LLDLEHKLNY…ILGAVYIDSN (130 aa). Residue Glu-46 coordinates Mg(2+). Asp-50 is a catalytic residue. Mg(2+)-binding residues include Asp-119 and Glu-122. Residue Glu-122 is part of the active site. Residues 160 to 228 enclose the DRBM domain; sequence DFKSILQEYV…AKALCIKLGV (69 aa).

It belongs to the ribonuclease III family. In terms of assembly, homodimer. Requires Mg(2+) as cofactor.

It localises to the cytoplasm. The enzyme catalyses Endonucleolytic cleavage to 5'-phosphomonoester.. Its function is as follows. Digests double-stranded RNA. Involved in the processing of primary rRNA transcript to yield the immediate precursors to the large and small rRNAs (23S and 16S). Processes some mRNAs, and tRNAs when they are encoded in the rRNA operon. Processes pre-crRNA and tracrRNA of type II CRISPR loci if present in the organism. The chain is Ribonuclease 3 from Fusobacterium nucleatum subsp. nucleatum (strain ATCC 25586 / DSM 15643 / BCRC 10681 / CIP 101130 / JCM 8532 / KCTC 2640 / LMG 13131 / VPI 4355).